Reading from the N-terminus, the 619-residue chain is Secretogranin-2 (619 aa).

An N-terminal signal peptide occupies residues 1-30; that stretch reads MTESKAYRFGAVLLLIHLIFLVPGTEAASF. Tyrosine 153 bears the Sulfotyrosine mark. A phosphoserine mark is found at serine 176 and serine 270. Residues 247 to 307 are disordered; the sequence is VGGEDWSPME…RKESKDQLSE (61 aa). Composition is skewed to basic and acidic residues over residues 255–286 and 295–307; these read MEEKIETQTQEEVRDSKENTEKNEQINEEMKR and EGNRKESKDQLSE. Serine 434, serine 534, serine 557, and serine 558 each carry phosphoserine.

Belongs to the chromogranin/secretogranin protein family. As to quaternary structure, interacts with Secretogranin III/SCG3. Brain. Expression in the pituitary is restricted to the anterior lobe. Expression in the hypothalamus is observed in the neuronal cells and neurons of arcuate nucleus, supraoptic nucleus and median eminence (at protein level).

The protein resides in the secreted. In terms of biological role, neuroendocrine protein of the granin family that regulates the biogenesis of secretory granules. In Rattus norvegicus (Rat), this protein is Secretogranin-2 (Scg2).